Here is a 571-residue protein sequence, read N- to C-terminus: Urease subunit alpha (571 aa).

In terms of domain architecture, Urease spans 134-571 (GAIDTHIHFI…LPMAQRYFLF (438 aa)). Positions 139, 141, and 222 each coordinate Ni(2+). N6-carboxylysine is present on Lys-222. His-224 is a substrate binding site. His-251 and His-277 together coordinate Ni(2+). His-325 acts as the Proton donor in catalysis. A Ni(2+)-binding site is contributed by Asp-365.

The protein belongs to the metallo-dependent hydrolases superfamily. Urease alpha subunit family. In terms of assembly, heterotrimer of UreA (gamma), UreB (beta) and UreC (alpha) subunits. Three heterotrimers associate to form the active enzyme. Ni cation is required as a cofactor. Carboxylation allows a single lysine to coordinate two nickel ions.

Its subcellular location is the cytoplasm. It catalyses the reaction urea + 2 H2O + H(+) = hydrogencarbonate + 2 NH4(+). The protein operates within nitrogen metabolism; urea degradation; CO(2) and NH(3) from urea (urease route): step 1/1. The sequence is that of Urease subunit alpha from Bordetella bronchiseptica (strain ATCC BAA-588 / NCTC 13252 / RB50) (Alcaligenes bronchisepticus).